A 1383-amino-acid chain; its full sequence is DNA-directed RNA polymerase subunit beta (1383 aa).

It belongs to the RNA polymerase beta chain family. The RNAP catalytic core consists of 2 alpha, 1 beta, 1 beta' and 1 omega subunit. When a sigma factor is associated with the core the holoenzyme is formed, which can initiate transcription.

It carries out the reaction RNA(n) + a ribonucleoside 5'-triphosphate = RNA(n+1) + diphosphate. In terms of biological role, DNA-dependent RNA polymerase catalyzes the transcription of DNA into RNA using the four ribonucleoside triphosphates as substrates. The polypeptide is DNA-directed RNA polymerase subunit beta (Bartonella bacilliformis (strain ATCC 35685 / KC583 / Herrer 020/F12,63)).